We begin with the raw amino-acid sequence, 432 residues long: Glutamyl-tRNA reductase (432 aa).

Substrate-binding positions include 49–52, S107, 112–114, and Q118; these read TCNR and ETQ. The active-site Nucleophile is C50. 186-191 is a binding site for NADP(+); that stretch reads GAGEMG.

It belongs to the glutamyl-tRNA reductase family. As to quaternary structure, homodimer.

It catalyses the reaction (S)-4-amino-5-oxopentanoate + tRNA(Glu) + NADP(+) = L-glutamyl-tRNA(Glu) + NADPH + H(+). Its pathway is porphyrin-containing compound metabolism; protoporphyrin-IX biosynthesis; 5-aminolevulinate from L-glutamyl-tRNA(Glu): step 1/2. Its function is as follows. Catalyzes the NADPH-dependent reduction of glutamyl-tRNA(Glu) to glutamate 1-semialdehyde (GSA). This chain is Glutamyl-tRNA reductase, found in Campylobacter jejuni subsp. doylei (strain ATCC BAA-1458 / RM4099 / 269.97).